The following is a 1008-amino-acid chain: Pre-mRNA-splicing factor SNU114 (1008 aa).

Ser85 is modified (phosphoserine). Thr88 bears the Phosphothreonine mark. In terms of domain architecture, tr-type G spans 131-338; sequence ERIINVGVIG…SYYYAHSIPS (208 aa). Positions 140 to 147 are G1; sequence GPLHSGKT. 140–147 contacts GTP; that stretch reads GPLHSGKT. The G2 stretch occupies residues 188 to 192; sequence GLSIK. Residues 214 to 217 are G3; sequence DAPG. GTP-binding positions include 214–218 and 268–271; these read DAPGH and NKLD. The G4 stretch occupies residues 268–271; that stretch reads NKLD. The segment at 315-317 is G5; sequence STK. The interval 504–536 is disordered; sequence TSQSESRQKRQLHDISKTETSNEDEDEDDETPS. Positions 509-520 are enriched in basic and acidic residues; it reads SRQKRQLHDISK. Over residues 524–536 the composition is skewed to acidic residues; the sequence is SNEDEDEDDETPS.

Belongs to the TRAFAC class translation factor GTPase superfamily. Classic translation factor GTPase family. EF-G/EF-2 subfamily. As to quaternary structure, belongs to the CWC complex (or CEF1-associated complex), a spliceosome sub-complex reminiscent of a late-stage spliceosome composed of the U2, U5 and U6 snRNAs and at least BUD13, BUD31, BRR2, CDC40, CEF1, CLF1, CUS1, CWC2, CWC15, CWC21, CWC22, CWC23, CWC24, CWC25, CWC27, ECM2, HSH155, IST3, ISY1, LEA1, MSL1, NTC20, PRP8, PRP9, PRP11, PRP19, PRP21, PRP22, PRP45, PRP46, SLU7, SMB1, SMD1, SMD2, SMD3, SMX2, SMX3, SNT309, SNU114, SPP2, SYF1, SYF2, RSE1 and YJU2. Component of the U4/U6-U5 tri-snRNP complex composed of the U4, U6 and U5 snRNAs and at least PRP3, PRP4, PRP6, PRP8, PRP18, PRP31, PRP38, SNU13, SNU23, SNU66, SNU114, SPP381, SMB1, SMD1, SMD2, SMD3, SMX2, SMX3, LSM2, LSM3, LSM4, LSM5, LSM6, LSM7, LSM8, BRR2 and DIB1. Interacts (via C-terminus) with CWC21. Interacts (via N-terminus) with PRP8 (via SCwid domain).

It localises to the nucleus. In terms of biological role, component of the U5 snRNP complex required for pre-mRNA splicing. Binds GTP. The protein is Pre-mRNA-splicing factor SNU114 (SNU114) of Saccharomyces cerevisiae (strain ATCC 204508 / S288c) (Baker's yeast).